An 897-amino-acid polypeptide reads, in one-letter code: Ubiquitin carboxyl-terminal hydrolase 33 (897 aa).

The segment at 7 to 110 (NDCPHLECVG…KQLPNAAKAV (104 aa)) adopts a UBP-type zinc-finger fold. Cys9, His11, Cys31, Cys34, Cys44, Cys49, Cys54, His61, His65, His71, Cys84, and Cys87 together coordinate Zn(2+). The USP domain maps to 156-670 (TGLKNIGNTC…EAYVLFYKKS (515 aa)). The active-site Nucleophile is Cys165. Disordered regions lie at residues 261–308 (LIPE…GPRV) and 343–420 (GSHG…HKKV). A compositionally biased stretch (polar residues) spans 287-297 (DDFQSCESCGS). 2 stretches are compositionally biased toward basic and acidic residues: residues 299 to 308 (DRADNEGPRV) and 344 to 353 (SHGDLDKDVD). Positions 355–396 (TSDSRPIISSQGAIKAQGRTSDSEIQVSSTVRPQSPTGNEGI) are enriched in polar residues. Residues 398-411 (SRLSSSPPKSSAWP) are compositionally biased toward low complexity. His628 serves as the catalytic Proton acceptor. DUSP domains lie at 672-765 (DETQ…LYVC) and 773-876 (EKLE…RPSV). Positions 875 to 884 (SVSHQESETS) are enriched in low complexity. Positions 875–897 (SVSHQESETSQSEEKIEVETRTV) are disordered. Basic and acidic residues predominate over residues 886 to 897 (SEEKIEVETRTV).

It belongs to the peptidase C19 family. USP20/USP33 subfamily.

It localises to the cytoplasm. Its subcellular location is the perinuclear region. The protein resides in the cytoskeleton. The protein localises to the microtubule organizing center. It is found in the centrosome. The enzyme catalyses Thiol-dependent hydrolysis of ester, thioester, amide, peptide and isopeptide bonds formed by the C-terminal Gly of ubiquitin (a 76-residue protein attached to proteins as an intracellular targeting signal).. Its function is as follows. Deubiquitinating enzyme involved in various processes such as centrosome duplication, cellular migration and beta-2 adrenergic receptor/ADRB2 recycling. Involved in regulation of centrosome duplication by mediating deubiquitination of ccp110 in S and G2/M phase, leading to stabilize ccp110 during the period which centrioles duplicate and elongate. Involved in cell migration via its interaction with intracellular domain of robo1, leading to regulate the Slit signaling. Plays a role in commissural axon guidance cross the ventral midline of the neural tube in a Slit-dependent manner, possibly by mediating the deubiquitination of robo1. Acts as a regulator of G-protein coupled receptor (GPCR) signaling by mediating the deubiquitination of beta-arrestins (arrb1 and arrb2) and beta-2 adrenergic receptor (adrb2). Deubiquitinates dio2, thereby regulating thyroid hormone regulation. Mediates deubiquitination of both 'Lys-48'- and 'Lys-63'-linked polyubiquitin chains. The polypeptide is Ubiquitin carboxyl-terminal hydrolase 33 (usp33) (Danio rerio (Zebrafish)).